Here is a 469-residue protein sequence, read N- to C-terminus: Tetratricopeptide repeat protein 38 (469 aa).

Position 2 is an N-acetylalanine (A2). The residue at position 5 (S5) is a Phosphoserine. TPR repeat units follow at residues 108–141 (REQL…HPTD), 180–213 (SYVK…NPTD), and 252–285 (CHNY…SLQA).

The protein belongs to the TTC38 family.

This is Tetratricopeptide repeat protein 38 (TTC38) from Homo sapiens (Human).